We begin with the raw amino-acid sequence, 242 residues long: DnaJ homolog subfamily B member 6 (242 aa).

Residues Val2 to Gly69 enclose the J domain. The interval Val2–Gly146 is interaction with HSP70. Residues Phe119 to Lys242 form an interaction with KRT18 region. Arg135 bears the Omega-N-methylarginine mark.

In terms of assembly, homooligomer. Interacts with BAG3, HSPB8 and STUB1. Interacts with ALKBH1. Interacts with HSP70, KRT18 and PTTG. As to expression, expressed in all tissues examined with highest expression in brain and retina and lower levels observed in testis, spleen, heart, liver and kidney.

It is found in the cytoplasm. It localises to the perinuclear region. The protein localises to the nucleus. Its subcellular location is the myofibril. The protein resides in the sarcomere. It is found in the z line. In terms of biological role, has a stimulatory effect on the ATPase activity of HSP70 in a dose-dependent and time-dependent manner and hence acts as a co-chaperone of HSP70. Plays an indispensable role in the organization of KRT8/KRT18 filaments. Acts as an endogenous molecular chaperone for neuronal proteins including huntingtin. Suppresses aggregation and toxicity of polyglutamine-containing, aggregation-prone proteins. Also reduces cellular toxicity and caspase-3 activity. This is DnaJ homolog subfamily B member 6 (DNAJB6) from Bos taurus (Bovine).